Here is a 294-residue protein sequence, read N- to C-terminus: N-acetylmuramic acid 6-phosphate etherase (294 aa).

The region spanning 56-219 (TSYSLKNGGR…STLSMVSVGK (164 aa)) is the SIS domain. Glu-84 functions as the Proton donor in the catalytic mechanism. The active site involves Glu-115.

This sequence belongs to the GCKR-like family. MurNAc-6-P etherase subfamily. As to quaternary structure, homodimer.

The catalysed reaction is N-acetyl-D-muramate 6-phosphate + H2O = N-acetyl-D-glucosamine 6-phosphate + (R)-lactate. The protein operates within amino-sugar metabolism; 1,6-anhydro-N-acetylmuramate degradation. It functions in the pathway amino-sugar metabolism; N-acetylmuramate degradation. Its pathway is cell wall biogenesis; peptidoglycan recycling. Specifically catalyzes the cleavage of the D-lactyl ether substituent of MurNAc 6-phosphate, producing GlcNAc 6-phosphate and D-lactate. Together with AnmK, is also required for the utilization of anhydro-N-acetylmuramic acid (anhMurNAc) either imported from the medium or derived from its own cell wall murein, and thus plays a role in cell wall recycling. The polypeptide is N-acetylmuramic acid 6-phosphate etherase (Francisella tularensis subsp. novicida (strain U112)).